A 389-amino-acid polypeptide reads, in one-letter code: UDP-D-apiose/UDP-D-xylose synthase 1 (389 aa).

NAD(+)-binding residues include Phe-28, Ile-29, Asp-49, Asn-76, Ile-77, and Leu-96. The UDP-alpha-D-glucuronate site is built by Tyr-105, Thr-139, Glu-141, Arg-182, and Tyr-185. Positions 185 and 189 each coordinate NAD(+). The active-site Proton acceptor is Tyr-185. UDP-alpha-D-glucuronate is bound at residue Asn-214. NAD(+) is bound by residues Trp-215 and Arg-235. UDP-alpha-D-glucuronate contacts are provided by Lys-251, Val-253, Arg-260, Tyr-331, Tyr-335, Asp-337, and Arg-341.

It belongs to the NAD(P)-dependent epimerase/dehydratase family. As to quaternary structure, homodimer and heterodimer with AXS2. The cofactor is NAD(+). As to expression, widely expressed with stronger expression in leaves and stems, and lower levels in flowers, siliques, pistils, pollen and roots.

It localises to the cytoplasm. It carries out the reaction UDP-alpha-D-glucuronate + H(+) = UDP-alpha-D-xylose + CO2. The catalysed reaction is UDP-alpha-D-glucuronate + H(+) = UDP-alpha-D-apiose + CO2. With respect to regulation, inhibited by UDP-D-galacturonate. In terms of biological role, together with AXS2, catalyzes the conversion of UDP-D-glucuronate into a mixture of UDP-D-apiose (UDP-Api) as the main product and UDP-D-xylose to a lesser extent, via a cycle of oxidation and reduction. D-Apiose (3-C-hydroxymethyl-d-erythrose) is the only plant cell wall monosaccharide with a branched carbon skeleton and is found in rhamnogalacturonan II (RG-II), apiogalacturonan, and several apioglycosides. The polypeptide is UDP-D-apiose/UDP-D-xylose synthase 1 (Arabidopsis thaliana (Mouse-ear cress)).